The sequence spans 427 residues: Delta(14)-sterol reductase (427 aa).

The Cytoplasmic portion of the chain corresponds to 1–25; that stretch reads MSEQESRDNAAVDAVRQKYGFGFSW. The chain crosses the membrane as a helical span at residues 26–46; it reads LVLMIALPPLVYYLWICVTYY. At 47 to 70 the chain is on the periplasmic side; that stretch reads QGELVFTSDAAAWRRFWSHVAPPT. The chain crosses the membrane as a helical span at residues 71-91; sequence WHAAGLYAAWFLGQAALQVWA. At 92–110 the chain is on the cytoplasmic side; that stretch reads PGPTVQGMKLPDGSRLDYR. Residues 111–131 form a helical membrane-spanning segment; that stretch reads MNGIFSFLFTLAVVFGLVTMG. Residues 132-141 are Periplasmic-facing; it reads WLDATVLYDQ. Residues 142–162 traverse the membrane as a helical segment; it reads LGPLLTVVNIFTFVFAGFLYF. The Cytoplasmic segment spans residues 163-197; that stretch reads WGLNGKQWERPTGRPFYDYFMGTALNPRIGSLDLK. The chain crosses the membrane as a helical span at residues 198-218; that stretch reads LFCEARPGMIFWLLMNLSMAA. Residues 219-226 are Periplasmic-facing; it reads KQYELHGT. Residues 227-247 form a helical membrane-spanning segment; that stretch reads VTVPMLLVVGFQSFYLIDYFI. At 248 to 262 the chain is on the cytoplasmic side; the sequence is HEEAVLTTWDIKHEK. Residues 263–283 form a helical membrane-spanning segment; the sequence is FGWMLCWGDLVWLPFTYTLQA. Residues 284-291 lie on the Periplasmic side of the membrane; it reads QYLVHHTH. A helical transmembrane segment spans residues 292 to 312; it reads DLPVWGIIAIVALNLAGYAIF. At 313-356 the chain is on the cytoplasmic side; the sequence is RGANIQKHHFRRDPNRIVWGKPAKYIKTKQGSLLLTSGWWGIAR. Residues K319, R323, L347, W352, and 359 to 360 contribute to the NADP(+) site; that span reads NY. Residues 357–377 traverse the membrane as a helical segment; it reads HMNYFGDLMIALSWCLPAAFG. A topological domain (periplasmic) is located at residue S378. The helical transmembrane segment at 379 to 399 threads the bilayer; it reads PIPYFHIVYFTILLLHREKRD. NADP(+)-binding positions include D399, 403-407, and Y414; that span reads CLAKY. At 400–427 the chain is on the cytoplasmic side; the sequence is DAMCLAKYGEDWLQYRKKVPWRIVPKIY.

It belongs to the ERG4/ERG24 family.

The protein resides in the cell inner membrane. The enzyme catalyses 4,4-dimethyl-5alpha-cholesta-8,24-dien-3beta-ol + NADP(+) = 4,4-dimethyl-5alpha-cholesta-8,14,24-trien-3beta-ol + NADPH + H(+). It functions in the pathway steroid biosynthesis; zymosterol biosynthesis; zymosterol from lanosterol. Functionally, reduces the C14=C15 double bond of 4,4-dimethyl-cholesta-8,14,24-trienol to produce 4,4-dimethyl-cholesta-8,24-dienol. Complements the deletion of the Delta(14)-sterol reductase gene ERG24 in yeast. This is Delta(14)-sterol reductase from Methylotuvimicrobium alcaliphilum (strain DSM 19304 / NCIMB 14124 / VKM B-2133 / 20Z) (Methylomicrobium alcaliphilum).